The chain runs to 607 residues: Chaperone protein DnaK (607 aa).

Phosphothreonine; by autocatalysis is present on T174. The segment covering 579 to 592 has biased composition (low complexity); that stretch reads AQAQAQQQAGANAG. A disordered region spans residues 579 to 607; sequence AQAQAQQQAGANAGSDKKDEDVAEAEVVD.

It belongs to the heat shock protein 70 family.

Its function is as follows. Acts as a chaperone. The sequence is that of Chaperone protein DnaK from Fusobacterium nucleatum subsp. nucleatum (strain ATCC 25586 / DSM 15643 / BCRC 10681 / CIP 101130 / JCM 8532 / KCTC 2640 / LMG 13131 / VPI 4355).